The chain runs to 509 residues: Probable cytosol aminopeptidase (509 aa).

Positions 277 and 282 each coordinate Mn(2+). K289 is a catalytic residue. Residues D300, D359, and E361 each coordinate Mn(2+). The active site involves R363.

It belongs to the peptidase M17 family. Requires Mn(2+) as cofactor.

It is found in the cytoplasm. It catalyses the reaction Release of an N-terminal amino acid, Xaa-|-Yaa-, in which Xaa is preferably Leu, but may be other amino acids including Pro although not Arg or Lys, and Yaa may be Pro. Amino acid amides and methyl esters are also readily hydrolyzed, but rates on arylamides are exceedingly low.. It carries out the reaction Release of an N-terminal amino acid, preferentially leucine, but not glutamic or aspartic acids.. Its function is as follows. Presumably involved in the processing and regular turnover of intracellular proteins. Catalyzes the removal of unsubstituted N-terminal amino acids from various peptides. This Chloroherpeton thalassium (strain ATCC 35110 / GB-78) protein is Probable cytosol aminopeptidase.